Here is a 91-residue protein sequence, read N- to C-terminus: Small ribosomal subunit protein bS20 (91 aa).

This sequence belongs to the bacterial ribosomal protein bS20 family.

Functionally, binds directly to 16S ribosomal RNA. In Caulobacter vibrioides (strain ATCC 19089 / CIP 103742 / CB 15) (Caulobacter crescentus), this protein is Small ribosomal subunit protein bS20.